Reading from the N-terminus, the 293-residue chain is Group 3 late-embryogenesis abundant protein, mitochondrial (293 aa).

The transit peptide at 1–31 directs the protein to the mitochondrion; that stretch reads MFLARNAGRAGYRGVVAYQQAASFSVSSAKA. The segment covering 27–43 has biased composition (low complexity); it reads SSAKAAGSRSSGGSDAG. A disordered region spans residues 27–52; sequence SSAKAAGSRSSGGSDAGDYAREAAEH. LEA 11-mer repeat repeat units follow at residues 58–68, 83–93, 123–133, 134–144, 145–155, 160–170, 171–181, 199–209, and 210–220; these read KDLKNEASWKA, KDTVKEGVHDM, KNAAQDTAATL, KDKAGSAWNQA, KHVVEDKGEDV, KDTASKVWGKA, KHVAEDVKENA, KDKAADVLSGA, and KHTAENLAHKA. The tract at residues 217–293 is disordered; the sequence is AHKAQAAIHD…KGPGQAGGRR (77 aa). Residues 230-265 show a composition bias toward low complexity; it reads SSGSQSQSQSQSQYRQGQQQGRQDQQQSKSQWGQTS. A compositionally biased stretch (gly residues) spans 279–293; that stretch reads GPQGGKGPGQAGGRR.

The protein belongs to the LEA type 4 family.

The protein localises to the mitochondrion. In terms of biological role, mitochondrial heat soluble protein acting as a molecular shield in water-deficient condition. The polypeptide is Group 3 late-embryogenesis abundant protein, mitochondrial (Ramazzottius varieornatus (Water bear)).